The sequence spans 476 residues: ATP synthase subunit beta (476 aa).

157-164 serves as a coordination point for ATP; sequence GGAGVGKT.

The protein belongs to the ATPase alpha/beta chains family. In terms of assembly, F-type ATPases have 2 components, CF(1) - the catalytic core - and CF(0) - the membrane proton channel. CF(1) has five subunits: alpha(3), beta(3), gamma(1), delta(1), epsilon(1). CF(0) has three main subunits: a(1), b(2) and c(9-12). The alpha and beta chains form an alternating ring which encloses part of the gamma chain. CF(1) is attached to CF(0) by a central stalk formed by the gamma and epsilon chains, while a peripheral stalk is formed by the delta and b chains.

The protein localises to the cell membrane. The catalysed reaction is ATP + H2O + 4 H(+)(in) = ADP + phosphate + 5 H(+)(out). Functionally, produces ATP from ADP in the presence of a proton gradient across the membrane. The catalytic sites are hosted primarily by the beta subunits. In Mycoplasma genitalium (strain ATCC 33530 / DSM 19775 / NCTC 10195 / G37) (Mycoplasmoides genitalium), this protein is ATP synthase subunit beta.